The following is a 346-amino-acid chain: DNA-directed RNA polymerase subunit alpha (346 aa).

The interval Met-1–Asp-242 is alpha N-terminal domain (alpha-NTD). Residues Leu-258–Ala-346 are alpha C-terminal domain (alpha-CTD).

Belongs to the RNA polymerase alpha chain family. Homodimer. The RNAP catalytic core consists of 2 alpha, 1 beta, 1 beta' and 1 omega subunit. When a sigma factor is associated with the core the holoenzyme is formed, which can initiate transcription.

The enzyme catalyses RNA(n) + a ribonucleoside 5'-triphosphate = RNA(n+1) + diphosphate. Functionally, DNA-dependent RNA polymerase catalyzes the transcription of DNA into RNA using the four ribonucleoside triphosphates as substrates. The sequence is that of DNA-directed RNA polymerase subunit alpha from Maridesulfovibrio salexigens (strain ATCC 14822 / DSM 2638 / NCIMB 8403 / VKM B-1763) (Desulfovibrio salexigens).